The sequence spans 74 residues: Heat shock factor-binding protein 1-like protein 1 (74 aa).

Residues 12-65 adopt a coiled-coil conformation; sequence RALRDAAENLFQELQEHFQALTATLNLRMEEMGNRIEDLQKNVKDLMVQAGIEN.

This sequence belongs to the HSBP1 family.

This Homo sapiens (Human) protein is Heat shock factor-binding protein 1-like protein 1 (HSBP1L1).